A 304-amino-acid chain; its full sequence is Protoheme IX farnesyltransferase 1 (304 aa).

The next 8 helical transmembrane spans lie at 24 to 44 (VVVLMLITSLIGMLLATKAPL), 47 to 67 (FVPWQVLIFGNLGIGLCAGAA), 99 to 119 (MALGFALLLALAGMAVLLAFT), 122 to 142 (LTAWLTLASLLGYAALYTGFL), 150 to 170 (IVIGGLAGAAPPLLGWVAITG), 176 to 196 (PLLLVLIIFAWTPPHFWALCI), 228 to 248 (LVLFAVSLMPFVIHMSGLVYL), and 280 to 300 (YSIVYLFLLFMALLVDHYLPL).

The protein belongs to the UbiA prenyltransferase family. Protoheme IX farnesyltransferase subfamily.

It localises to the cell inner membrane. The catalysed reaction is heme b + (2E,6E)-farnesyl diphosphate + H2O = Fe(II)-heme o + diphosphate. Its pathway is porphyrin-containing compound metabolism; heme O biosynthesis; heme O from protoheme: step 1/1. Functionally, converts heme B (protoheme IX) to heme O by substitution of the vinyl group on carbon 2 of heme B porphyrin ring with a hydroxyethyl farnesyl side group. The polypeptide is Protoheme IX farnesyltransferase 1 (Pseudomonas paraeruginosa (strain DSM 24068 / PA7) (Pseudomonas aeruginosa (strain PA7))).